The following is a 56-amino-acid chain: Frontoxin I (56 aa).

Disulfide bonds link C3–C22, C17–C39, C41–C52, and C53–C56.

This sequence belongs to the three-finger toxin family. Short-chain subfamily. Type I alpha-neurotoxin sub-subfamily. As to expression, expressed by the venom gland.

The protein localises to the secreted. Functionally, binds to muscle nicotinic acetylcholine receptor (nAChR) and inhibit acetylcholine from binding to the receptor, thereby impairing neuromuscular transmission. This is Frontoxin I from Micrurus frontalis (Coral snake).